The primary structure comprises 417 residues: Serine hydroxymethyltransferase (417 aa).

Lysine 54 carries the post-translational modification N6-acetyllysine. (6S)-5,6,7,8-tetrahydrofolate contacts are provided by residues leucine 121 and 125 to 127; that span reads GHL. Lysine 229 bears the N6-(pyridoxal phosphate)lysine mark. N6-acetyllysine occurs at positions 250, 285, and 354. 355–357 provides a ligand contact to (6S)-5,6,7,8-tetrahydrofolate; it reads SPF. Lysine 375 carries the post-translational modification N6-acetyllysine.

This sequence belongs to the SHMT family. As to quaternary structure, homodimer. Pyridoxal 5'-phosphate is required as a cofactor.

The protein localises to the cytoplasm. The enzyme catalyses (6R)-5,10-methylene-5,6,7,8-tetrahydrofolate + glycine + H2O = (6S)-5,6,7,8-tetrahydrofolate + L-serine. The protein operates within one-carbon metabolism; tetrahydrofolate interconversion. It functions in the pathway amino-acid biosynthesis; glycine biosynthesis; glycine from L-serine: step 1/1. Functionally, catalyzes the reversible interconversion of serine and glycine with tetrahydrofolate (THF) serving as the one-carbon carrier. This reaction serves as the major source of one-carbon groups required for the biosynthesis of purines, thymidylate, methionine, and other important biomolecules. Also exhibits THF-independent aldolase activity toward beta-hydroxyamino acids, producing glycine and aldehydes, via a retro-aldol mechanism. This Shigella dysenteriae serotype 1 (strain Sd197) protein is Serine hydroxymethyltransferase.